The following is a 146-amino-acid chain: Hemoglobin subunit beta (146 aa).

Val1 carries the N-acetylvaline modification. Residues 2–146 (HLSGEEKAAV…VANALAHKYH (145 aa)) form the Globin domain. The residue at position 12 (Thr12) is a Phosphothreonine. Residue Ser44 is modified to Phosphoserine. Lys59 carries the post-translational modification N6-acetyllysine. His63 provides a ligand contact to heme b. At Lys82 the chain carries N6-acetyllysine. His92 is a binding site for heme b. The residue at position 93 (Cys93) is an S-nitrosocysteine. N6-acetyllysine is present on Lys144.

This sequence belongs to the globin family. In terms of assembly, heterotetramer of two alpha chains and two beta chains. As to expression, red blood cells.

Functionally, involved in oxygen transport from the lung to the various peripheral tissues. This is Hemoglobin subunit beta (HBB) from Pteropus alecto (Black flying fox).